The chain runs to 289 residues: 4-hydroxy-tetrahydrodipicolinate synthase (289 aa).

Threonine 46 provides a ligand contact to pyruvate. Residue tyrosine 134 is the Proton donor/acceptor of the active site. Lysine 162 functions as the Schiff-base intermediate with substrate in the catalytic mechanism. Valine 204 is a pyruvate binding site.

The protein belongs to the DapA family. In terms of assembly, homotetramer; dimer of dimers.

The protein localises to the cytoplasm. The catalysed reaction is L-aspartate 4-semialdehyde + pyruvate = (2S,4S)-4-hydroxy-2,3,4,5-tetrahydrodipicolinate + H2O + H(+). It functions in the pathway amino-acid biosynthesis; L-lysine biosynthesis via DAP pathway; (S)-tetrahydrodipicolinate from L-aspartate: step 3/4. In terms of biological role, catalyzes the condensation of (S)-aspartate-beta-semialdehyde [(S)-ASA] and pyruvate to 4-hydroxy-tetrahydrodipicolinate (HTPA). The chain is 4-hydroxy-tetrahydrodipicolinate synthase from Bacillus velezensis (strain DSM 23117 / BGSC 10A6 / LMG 26770 / FZB42) (Bacillus amyloliquefaciens subsp. plantarum).